The primary structure comprises 113 residues: Hemerythrin (113 aa).

His25, His54, Glu58, His73, His77, His101, and Asp106 together coordinate Fe cation.

The protein belongs to the hemerythrin family. Homooctamer.

Functionally, hemerythrin is a respiratory protein in blood cells of certain marine worms. The oxygen-binding site in each chain contains two iron atoms. The protein is Hemerythrin of Themiste dyscrita (Peanut worm).